A 248-amino-acid polypeptide reads, in one-letter code: MYRNQYDSDITTFSPSGRIHQIEYAMEAVKQGGAAVALKSKQFAVLVSLKRSSSELGSYQKKIFVVDDHVGIAISGLTADARMLCNYMRNECSNYNYVYESQMRVERLVTKVADKHQVHTQRYGRRPYGVGLLVAGYDQLGAHIYQTCPSGNFYDYKSISIGSRSQSAKTYLEKHFESFEECTLEQLITHGLRALRETIPNTDDTLNSKNVSIGIVGEGQPFKIIEEADAQPYLNLLENEEPVEMQTN.

It belongs to the peptidase T1A family. In terms of assembly, the 26S proteasome consists of a 20S proteasome core and two 19S regulatory subunits. The 20S proteasome core is composed of 28 subunits that are arranged in four stacked rings, resulting in a barrel-shaped structure. The two end rings are each formed by seven alpha subunits, and the two central rings are each formed by seven beta subunits. The catalytic chamber with the active sites is on the inside of the barrel.

Its subcellular location is the cytoplasm. The protein resides in the nucleus. Functionally, the proteasome is a multicatalytic proteinase complex which is characterized by its ability to cleave peptides with Arg, Phe, Tyr, Leu, and Glu adjacent to the leaving group at neutral or slightly basic pH. The proteasome has an ATP-dependent proteolytic activity. The polypeptide is Proteasome subunit alpha type-1 (psmA1) (Dictyostelium discoideum (Social amoeba)).